Here is a 256-residue protein sequence, read N- to C-terminus: MLNIGPFTFKSRLLLGTGKFSDYDVQRKAIEVSEAEILTFAVRRMDIFDAQQPNLLEKIDIKNYTLLPNTAGAKTAEEAVRIAKLAKASGLCDMVKVEVIGDDKTLLPDPVETLKASEMLLEEGFIVLPYTSDDVVLARKLQELGVHAIMPGASPIGSGLGIVNPLNISFIIEQATVPVIVDAGVGSPADAAFAMELGADGVLLNTAVSGAKDPIKMAEAMKLGIHAGRLGFEAGRIARKRFATASSPLEGMSVVE.

Catalysis depends on Lys-96, which acts as the Schiff-base intermediate with DXP. 1-deoxy-D-xylulose 5-phosphate-binding positions include Gly-157, 183 to 184 (AG), and 205 to 206 (NT).

It belongs to the ThiG family. In terms of assembly, homotetramer. Forms heterodimers with either ThiH or ThiS.

Its subcellular location is the cytoplasm. It catalyses the reaction [ThiS sulfur-carrier protein]-C-terminal-Gly-aminoethanethioate + 2-iminoacetate + 1-deoxy-D-xylulose 5-phosphate = [ThiS sulfur-carrier protein]-C-terminal Gly-Gly + 2-[(2R,5Z)-2-carboxy-4-methylthiazol-5(2H)-ylidene]ethyl phosphate + 2 H2O + H(+). The protein operates within cofactor biosynthesis; thiamine diphosphate biosynthesis. In terms of biological role, catalyzes the rearrangement of 1-deoxy-D-xylulose 5-phosphate (DXP) to produce the thiazole phosphate moiety of thiamine. Sulfur is provided by the thiocarboxylate moiety of the carrier protein ThiS. In vitro, sulfur can be provided by H(2)S. This chain is Thiazole synthase, found in Bacillus cytotoxicus (strain DSM 22905 / CIP 110041 / 391-98 / NVH 391-98).